Reading from the N-terminus, the 565-residue chain is Glucose starvation modulator protein 1 (565 aa).

Positions 20–48 (CVFCHQKHLQCSNERPCKNCVKRNIAHGC) form a DNA-binding region, zn(2)-C6 fungal-type. Disordered stretches follow at residues 63–106 (GVSG…ESSN) and 250–269 (QVSP…NTLS). Polar residues predominate over residues 82–93 (SPLSTSMSPTDS). Residues 252-269 (SPSPSNTSTSENNTNTLS) show a composition bias toward low complexity.

It belongs to the ERT1/acuK family.

Its subcellular location is the nucleus. In terms of biological role, transcription factor which regulates nonfermentable carbon utilization. The sequence is that of Glucose starvation modulator protein 1 (GSM1) from Candida dubliniensis (strain CD36 / ATCC MYA-646 / CBS 7987 / NCPF 3949 / NRRL Y-17841) (Yeast).